The primary structure comprises 300 residues: MKPLQTNFNLLTYLYERKEIVEDTLNKSIPRGNPTFIYDSIRYSLSAGGKRIRPILCLASCELAGGTMEMALPTACALEMIHTMSLIHDDLPAMDNDSYRRGKPTNHIIYGEDLAILAGDALLAYAFEFIATQTKNVPADLIVKVIAQVAHSVTTSGLVGGQIIDLSSEGKSDTTLETLNFIHIHKTGALLEAAVLSGALLAGAKEKDMNRFLRYAQNIGLAFQIIDDVLDIISTEEKLGKSIGKDLKTQKATYPSFWGVEESIKQAELLVEEAKEEILYFDNKAIPLIAIADFIVNRNN.

Isopentenyl diphosphate-binding residues include Lys-50, Arg-53, and His-82. 2 residues coordinate Mg(2+): Asp-89 and Asp-95. Residue Arg-100 participates in (2E,6E)-farnesyl diphosphate binding. Arg-101 contacts isopentenyl diphosphate. Positions 186, 187, and 224 each coordinate (2E,6E)-farnesyl diphosphate.

It belongs to the FPP/GGPP synthase family. Mg(2+) serves as cofactor.

It is found in the plastid. The protein resides in the cyanelle. It carries out the reaction isopentenyl diphosphate + (2E,6E)-farnesyl diphosphate = (2E,6E,10E)-geranylgeranyl diphosphate + diphosphate. Its pathway is isoprenoid biosynthesis; geranylgeranyl diphosphate biosynthesis; geranylgeranyl diphosphate from farnesyl diphosphate and isopentenyl diphosphate: step 1/1. Its function is as follows. Catalyzes the condensation of farnesyl diphosphate (FPP) and isopentenyl diphosphate (IPP) to yield geranylgeranyl diphosphate (GGPP) needed for biosynthesis of carotenoids and diterpenes. In Cyanophora paradoxa, this protein is Geranylgeranyl diphosphate synthase (crtE).